The chain runs to 192 residues: Cytidylate kinase (192 aa).

Residue 7–15 (GPPGSGKST) coordinates ATP.

Belongs to the cytidylate kinase family. Type 2 subfamily.

It is found in the cytoplasm. It carries out the reaction CMP + ATP = CDP + ADP. The enzyme catalyses dCMP + ATP = dCDP + ADP. The sequence is that of Cytidylate kinase from Halorubrum lacusprofundi (strain ATCC 49239 / DSM 5036 / JCM 8891 / ACAM 34).